A 116-amino-acid chain; its full sequence is Large-conductance mechanosensitive channel (116 aa).

The next 2 membrane-spanning stretches (helical) occupy residues 7–27 and 64–84; these read EFAL…GAAF and GLFI…FIFV.

This sequence belongs to the MscL family. As to quaternary structure, homopentamer.

The protein localises to the cell membrane. In terms of biological role, channel that opens in response to stretch forces in the membrane lipid bilayer. May participate in the regulation of osmotic pressure changes within the cell. The protein is Large-conductance mechanosensitive channel of Staphylococcus epidermidis (strain ATCC 35984 / DSM 28319 / BCRC 17069 / CCUG 31568 / BM 3577 / RP62A).